A 60-amino-acid polypeptide reads, in one-letter code: Large ribosomal subunit protein bL32 (60 aa).

The tract at residues 1 to 44 (MAVQQNKKSRSARDMRRSHDALEASTLSVEKTTGEVHLRHHVSP) is disordered. Residues 11–22 (SARDMRRSHDAL) are compositionally biased toward basic and acidic residues.

This sequence belongs to the bacterial ribosomal protein bL32 family.

The protein is Large ribosomal subunit protein bL32 of Pseudomonas fluorescens (strain SBW25).